We begin with the raw amino-acid sequence, 390 residues long: Cold-responsive protein kinase 1 (390 aa).

Positions 41-320 (FSAENKIGEG…VRLLTGEKDI (280 aa)) constitute a Protein kinase domain. Residues 47-55 (IGEGGFGSV) and K69 each bind ATP. The residue at position 114 (Y114) is a Phosphotyrosine. D169 functions as the Proton acceptor in the catalytic mechanism. 2 positions are modified to phosphoserine: S173 and S202. Phosphothreonine occurs at positions 203 and 208. Y216 is subject to Phosphotyrosine. Residues 345–390 (TKTEQVNRQNYTNPSSSSNGSSRDHSNAYSSGASSANAGNTFSSTI) are disordered. A compositionally biased stretch (low complexity) spans 354-390 (NYTNPSSSSNGSSRDHSNAYSSGASSANAGNTFSSTI).

This sequence belongs to the protein kinase superfamily. Ser/Thr protein kinase family. As to quaternary structure, interacts with and phosphorylates 14-3-3 proteins. Binds to GRF6 at the plasma membrane. Autophosphorylated.

Its subcellular location is the cell membrane. It carries out the reaction L-seryl-[protein] + ATP = O-phospho-L-seryl-[protein] + ADP + H(+). It catalyses the reaction L-threonyl-[protein] + ATP = O-phospho-L-threonyl-[protein] + ADP + H(+). With respect to regulation, activated by cold. Its function is as follows. Negative regulator of freezing tolerance that phosphorylates 14-3-3 proteins (e.g. GRF6) thus triggering their translocation from the cytosol to the nucleus in response to cold stress. In Arabidopsis thaliana (Mouse-ear cress), this protein is Cold-responsive protein kinase 1.